The chain runs to 406 residues: 1H-pyrrole-2-carbonyl-[peptidyl-carrier protein] brominase (406 aa).

FAD is bound by residues Ala17, Glu36, Arg42, His44, Ile45, Ser48, Arg101, Val124, Asp291, and Val304.

This sequence belongs to the flavin-dependent halogenase family.

It catalyses the reaction (1H-pyrrole-2-carbonyl)-[peptidyl-carrier protein] + 3 bromide + 3 FADH2 + 3 O2 = (3,4,5-tribromo-1H-pyrrole-2-carbonyl)-[peptidyl-carrier protein] + 3 FAD + 6 H2O. The catalysed reaction is (1H-pyrrole-2-carbonyl)-[peptidyl-carrier protein] + bromide + FADH2 + O2 = (5-bromo-1H-pyrrole-2-carbonyl)-[peptidyl-carrier protein] + FAD + 2 H2O. It carries out the reaction (5-bromo-1H-pyrrole-2-carbonyl)-[peptidyl-carrier protein] + bromide + FADH2 + O2 = (4,5-dibromo-1H-pyrrole-2-carbonyl)-[peptidyl-carrier protein] + FAD + 2 H2O. The enzyme catalyses (4,5-dibromo-1H-pyrrole-2-carbonyl)-[peptidyl-carrier protein] + bromide + FADH2 + O2 = (3,4,5-tribromo-1H-pyrrole-2-carbonyl)-[peptidyl-carrier protein] + FAD + 2 H2O. Its function is as follows. Brominase involved in the biosynthesis of polybrominated aromatic organic compounds. Catalyzes three successive rounds of bromination of pyrrolyl-S-Bmp1 to produce mono-, di- and tribromopyrrolyl-S-Bmp1. This Pseudoalteromonas luteoviolacea (strain 2ta16) protein is 1H-pyrrole-2-carbonyl-[peptidyl-carrier protein] brominase.